The following is a 430-amino-acid chain: Glial fibrillary acidic protein (430 aa).

The segment at 1-31 is disordered; sequence MERRRITSARRSYASSETMVRGHGPTRHLGT. A head region spans residues 1–70; that stretch reads MERRRITSAR…KETRASERAE (70 aa). Thr-7 is modified (phosphothreonine; by AURKB and ROCK1). The segment covering 9–18 has biased composition (polar residues); the sequence is ARRSYASSET. Omega-N-methylarginine is present on Arg-11. Ser-12 bears the Phosphoserine mark. The residue at position 21 (Arg-21) is an Omega-N-methylarginine. Arg-34 is subject to Citrulline. A Phosphoserine; by AURKB and ROCK1 modification is found at Ser-36. Thr-41 carries the post-translational modification Phosphothreonine. Residues 67–375 enclose the IF rod domain; sequence ERAEMMELND…KLLEGEENRI (309 aa). Residues 71 to 102 are coil 1A; that stretch reads MMELNDRFASYIEKVRFLEQQNKALAAELNQL. Ser-80 bears the Phosphoserine mark. The linker 1 stretch occupies residues 103 to 113; it reads RAKEPTKLADV. A phosphothreonine mark is found at Thr-108 and Thr-148. Residues 114–212 are coil 1B; that stretch reads YQAELRELRL…EEEVRELQEQ (99 aa). Residues 213–228 are linker 12; sequence LAQQQVHVEMDVAKPD. Residues 229-250 form a coil 2A region; it reads LTAALREIRTQYEAVATSNMQE. The segment at 251-254 is linker 2; that stretch reads TEEW. Residues 255–375 are coil 2B; that stretch reads YRSKFADLTD…KLLEGEENRI (121 aa). Ser-267 is subject to Phosphoserine. Arg-268 carries the post-translational modification Citrulline. Ser-321 is modified (phosphoserine). The interval 376–430 is tail; the sequence is TIPVQTFSNLQIRETSLDTKSVSEGHLKRNIVVKTVEMRDGEVIKESKQEHKDVM. Thr-381 is modified (phosphothreonine). A Phosphoserine modification is found at Ser-383. Citrulline is present on residues Arg-404 and Arg-414.

Belongs to the intermediate filament family. In terms of assembly, interacts with SYNM. As to quaternary structure, interacts with PSEN1 (via N-terminus). Phosphorylated by PKN1. As to expression, expressed in the cortex and hippocampus. Expression decreases following acute and chronic corticosterone treatment.

The protein localises to the cytoplasm. In terms of biological role, GFAP, a class-III intermediate filament, is a cell-specific marker that, during the development of the central nervous system, distinguishes astrocytes from other glial cells. This Rattus norvegicus (Rat) protein is Glial fibrillary acidic protein (Gfap).